Consider the following 833-residue polypeptide: 3-hydroxy-3-methylglutaryl-coenzyme A reductase (833 aa).

4 consecutive transmembrane segments (helical) span residues 10-32, 91-117, 160-180, and 301-321; these read FCARHQWEVIVATLALLACAASV, YLLIIAGVFSTFASFIFTSAVASLFWS, LALLGPTATLDTLLAVLLVGV, and SADYIVIATLLCALIIKFVFF. Residues 322-419 form a linker region; that stretch reads EEQRNWVIDM…EEVVMLVEQS (98 aa). The tract at residues 347–374 is disordered; it reads KPKFSVGDDSNSEVSTQTEGVLEDEWPT. The segment covering 354–365 has biased composition (polar residues); sequence DDSNSEVSTQTE. The catalytic stretch occupies residues 420–833; that stretch reads HIPLHRLEAV…ENITLKVPTL (414 aa). Catalysis depends on charge relay system residues Glu504 and Lys635. An N-linked (GlcNAc...) asparagine glycan is attached at Asn680. Asp711 acts as the Charge relay system in catalysis. N-linked (GlcNAc...) asparagine glycans are attached at residues Asn715 and Asn720. The active-site Proton donor is His809. N-linked (GlcNAc...) asparagine glycans are attached at residues Asn813 and Asn825.

The protein belongs to the HMG-CoA reductase family.

Its subcellular location is the endoplasmic reticulum membrane. The enzyme catalyses (R)-mevalonate + 2 NADP(+) + CoA = (3S)-3-hydroxy-3-methylglutaryl-CoA + 2 NADPH + 2 H(+). It participates in metabolic intermediate biosynthesis; (R)-mevalonate biosynthesis; (R)-mevalonate from acetyl-CoA: step 3/3. Its activity is regulated as follows. The activity of HMG-CoA-reductase is suppressed by exogenous mevalonate. Functionally, synthesis of mevalonate for the production of non-sterol isoprenoids, which are essential for growth differentiation. In Agrotis ipsilon (Black cutworm moth), this protein is 3-hydroxy-3-methylglutaryl-coenzyme A reductase (HMGR).